We begin with the raw amino-acid sequence, 98 residues long: Co-chaperonin GroES (98 aa).

A disordered region spans residues E35–V57.

Belongs to the GroES chaperonin family. As to quaternary structure, heptamer of 7 subunits arranged in a ring. Interacts with the chaperonin GroEL.

Its subcellular location is the cytoplasm. Its function is as follows. Together with the chaperonin GroEL, plays an essential role in assisting protein folding. The GroEL-GroES system forms a nano-cage that allows encapsulation of the non-native substrate proteins and provides a physical environment optimized to promote and accelerate protein folding. GroES binds to the apical surface of the GroEL ring, thereby capping the opening of the GroEL channel. The sequence is that of Co-chaperonin GroES from Cutibacterium acnes (strain DSM 16379 / KPA171202) (Propionibacterium acnes).